Consider the following 376-residue polypeptide: Pyrimidine monooxygenase RutA (376 aa).

Residues 61-62, Asn127, Glu136, 152-153, and Ser202 contribute to the FMN site; these read IK and RY.

This sequence belongs to the NtaA/SnaA/DszA monooxygenase family. RutA subfamily.

The enzyme catalyses uracil + FMNH2 + NADH + O2 = (Z)-3-ureidoacrylate + FMN + NAD(+) + H2O + H(+). It carries out the reaction thymine + FMNH2 + NADH + O2 = (Z)-2-methylureidoacrylate + FMN + NAD(+) + H2O + H(+). Functionally, catalyzes the pyrimidine ring opening between N-3 and C-4 by an unusual flavin hydroperoxide-catalyzed mechanism, adding oxygen atoms in the process to yield ureidoacrylate peracid, that immediately reacts with FMN forming ureidoacrylate and FMN-N(5)-oxide. The FMN-N(5)-oxide reacts spontaneously with NADH to produce FMN. Requires the flavin reductase RutF to regenerate FMN in vivo. The protein is Pyrimidine monooxygenase RutA of Methylorubrum extorquens (strain CM4 / NCIMB 13688) (Methylobacterium extorquens).